The sequence spans 196 residues: Putative NADH dehydrogenase/NAD(P)H nitroreductase Rpal_4764 (196 aa).

Belongs to the nitroreductase family. HadB/RutE subfamily. It depends on FMN as a cofactor.

The chain is Putative NADH dehydrogenase/NAD(P)H nitroreductase Rpal_4764 from Rhodopseudomonas palustris (strain TIE-1).